We begin with the raw amino-acid sequence, 361 residues long: tRNA-specific 2-thiouridylase MnmA (361 aa).

Residues 6 to 13 (LVSGGVDS) and Ile-32 contribute to the ATP site. Residues 93–95 (NPD) are interaction with target base in tRNA. Cys-98 functions as the Nucleophile in the catalytic mechanism. An intrachain disulfide couples Cys-98 to Cys-193. Gly-121 serves as a coordination point for ATP. The tract at residues 143–145 (KDQ) is interaction with tRNA. Cys-193 functions as the Cysteine persulfide intermediate in the catalytic mechanism.

The protein belongs to the MnmA/TRMU family.

The protein resides in the cytoplasm. The catalysed reaction is S-sulfanyl-L-cysteinyl-[protein] + uridine(34) in tRNA + AH2 + ATP = 2-thiouridine(34) in tRNA + L-cysteinyl-[protein] + A + AMP + diphosphate + H(+). Functionally, catalyzes the 2-thiolation of uridine at the wobble position (U34) of tRNA, leading to the formation of s(2)U34. This chain is tRNA-specific 2-thiouridylase MnmA, found in Porphyromonas gingivalis (strain ATCC 33277 / DSM 20709 / CIP 103683 / JCM 12257 / NCTC 11834 / 2561).